Here is a 420-residue protein sequence, read N- to C-terminus: Trophoblast glycoprotein (420 aa).

The signal sequence occupies residues 1–31; it reads MPGGCSRGPAAGDGRLRLARLALVLLGWVSS. At 32-355 the chain is on the extracellular side; sequence SSPTSSASSF…PILPPSLQTS (324 aa). An LRRNT domain is found at 53–91; that stretch reads SAQPPLPDQCPALCECSEAARTVKCVNRNLTEVPTDLPA. Intrachain disulfides connect cysteine 62–cysteine 68 and cysteine 66–cysteine 77. A glycan (N-linked (GlcNAc...) asparagine) is linked at asparagine 81. LRR repeat units lie at residues 92 to 113, 116 to 139, 141 to 163, 172 to 204, 209 to 232, 233 to 255, and 256 to 275; these read YVRNLFLTGNQLAVLPAGAFAR, PLAELAALNLSGSRLDEVRAGAFE, LPSLRQLDLSHNPLADLSPFAFS, PSPLVELILNHIVPPEDERQNRSFEGMVVAALL, LQGLRRLELASNHFLYLPRDVLAQ, LPSLRHLDLSNNSLVSLTYVSFR, and NLTHLESLHLEDNALKVLHN. A glycan (N-linked (GlcNAc...) asparagine) is linked at asparagine 124. N-linked (GlcNAc...) asparagine glycosylation occurs at asparagine 275. Residues 283–346 form the LRRCT domain; the sequence is GLPHIRVFLD…LNSADLDCDP (64 aa). 2 disulfide bridges follow: cysteine 298/cysteine 323 and cysteine 300/cysteine 344. A helical transmembrane segment spans residues 356 to 376; the sequence is YVFLGIVLALIGAIFLLVLYL. At 377 to 420 the chain is on the cytoplasmic side; it reads NRKGIKKWMHNIRDACRDHMEGYHYRYEINADPRLTNLSSNSDV. Position 418 is a phosphoserine (serine 418).

In terms of processing, highly glycosylated. Expressed by all types of trophoblasts as early as 9 weeks of development. Specific for trophoblastic cells except for amniotic epithelium. In adult tissues, the expression is limited to a few epithelial cell types but is found on a variety of carcinoma.

Its subcellular location is the cell membrane. Its function is as follows. May function as an inhibitor of Wnt/beta-catenin signaling by indirectly interacting with LRP6 and blocking Wnt3a-dependent LRP6 internalization. In Homo sapiens (Human), this protein is Trophoblast glycoprotein (TPBG).